Here is a 489-residue protein sequence, read N- to C-terminus: Cysteine--tRNA ligase (489 aa).

Residue Cys27 coordinates Zn(2+). Residues Val29–His39 carry the 'HIGH' region motif. Zn(2+) contacts are provided by Cys211, His236, and Glu240. Positions Lys268–Ser272 match the 'KMSKS' region motif. Lys271 contributes to the ATP binding site.

It belongs to the class-I aminoacyl-tRNA synthetase family. As to quaternary structure, monomer. It depends on Zn(2+) as a cofactor.

Its subcellular location is the cytoplasm. It catalyses the reaction tRNA(Cys) + L-cysteine + ATP = L-cysteinyl-tRNA(Cys) + AMP + diphosphate. This chain is Cysteine--tRNA ligase, found in Prochlorococcus marinus (strain AS9601).